The following is a 385-amino-acid chain: Homoserine O-succinyltransferase (385 aa).

The AB hydrolase-1 domain occupies 46 to 355 (NAILICHALS…NSQHGHDAFL (310 aa)). Ser151 acts as the Nucleophile in catalysis. Residue Arg221 coordinates substrate. Residues Asp318 and His351 contribute to the active site. Asp352 provides a ligand contact to substrate.

The protein belongs to the AB hydrolase superfamily. MetX family. Homodimer.

It is found in the cytoplasm. The enzyme catalyses L-homoserine + succinyl-CoA = O-succinyl-L-homoserine + CoA. It participates in amino-acid biosynthesis; L-methionine biosynthesis via de novo pathway; O-succinyl-L-homoserine from L-homoserine: step 1/1. In terms of biological role, transfers a succinyl group from succinyl-CoA to L-homoserine, forming succinyl-L-homoserine. This chain is Homoserine O-succinyltransferase, found in Hydrogenovibrio crunogenus (strain DSM 25203 / XCL-2) (Thiomicrospira crunogena).